Consider the following 135-residue polypeptide: NADH-quinone oxidoreductase subunit K (135 aa).

A run of 3 helical transmembrane segments spans residues 33-53 (VLGL…FAIG), 63-83 (FLFM…AFVV), and 95-115 (IMFI…LAIL).

Belongs to the complex I subunit 4L family. NDH-1 is composed of 14 different subunits. Subunits NuoA, H, J, K, L, M, N constitute the membrane sector of the complex.

The protein resides in the cell inner membrane. The catalysed reaction is a quinone + NADH + 5 H(+)(in) = a quinol + NAD(+) + 4 H(+)(out). Functionally, NDH-1 shuttles electrons from NADH, via FMN and iron-sulfur (Fe-S) centers, to quinones in the respiratory chain. The immediate electron acceptor for the enzyme in this species is believed to be ubiquinone. Couples the redox reaction to proton translocation (for every two electrons transferred, four hydrogen ions are translocated across the cytoplasmic membrane), and thus conserves the redox energy in a proton gradient. The sequence is that of NADH-quinone oxidoreductase subunit K from Psychrobacter arcticus (strain DSM 17307 / VKM B-2377 / 273-4).